The primary structure comprises 234 residues: Small ribosomal subunit protein uS3 (234 aa).

Positions 39-107 (IRKFLKKELY…EVSINIKEVK (69 aa)) constitute a KH type-2 domain.

This sequence belongs to the universal ribosomal protein uS3 family. Part of the 30S ribosomal subunit. Forms a tight complex with proteins S10 and S14.

Functionally, binds the lower part of the 30S subunit head. Binds mRNA in the 70S ribosome, positioning it for translation. The sequence is that of Small ribosomal subunit protein uS3 from Helicobacter pylori (strain G27).